The chain runs to 156 residues: Ribosome maturation factor RimP (156 aa).

Belongs to the RimP family.

The protein resides in the cytoplasm. In terms of biological role, required for maturation of 30S ribosomal subunits. This chain is Ribosome maturation factor RimP, found in Bacillus cereus (strain B4264).